The chain runs to 329 residues: Cyclin-dependent kinase 7 (329 aa).

The Protein kinase domain maps to 4-287 (NEKLDFLGEG…ASQALRTKYF (284 aa)). Residues 10–18 (LGEGQFATV) and lysine 33 each bind ATP. The Proton acceptor role is filled by aspartate 129. Position 156 is a phosphoserine; by CDK1 and CDK2 (serine 156). Threonine 162 carries the post-translational modification Phosphothreonine. The segment at 309–329 (LKEQSNPAMATKRKRAEALEQ) is disordered. Serine 313 carries the phosphoserine modification.

This sequence belongs to the protein kinase superfamily. CMGC Ser/Thr protein kinase family. CDC2/CDKX subfamily. In terms of assembly, associates primarily with cyclin-H (CCNH) and MAT1 to form the CAK complex. CAK can further associate with the core-TFIIH to form the TFIIH basal transcription factor; this complex is sensitive to UV light. The CAK complex binds to p53/TP53 in response to DNA damage. Interacts with CDK2, SF1/NR5A1, PUF60 and PRKCI. Interacts with HINT1. In terms of processing, phosphorylation of Ser-156 during mitosis inactivates the enzyme. Phosphorylation of Thr-162 is required for activity. Phosphorylated at Ser-156 and Thr-162 by CDK2.

Its subcellular location is the nucleus. It localises to the cytoplasm. The protein resides in the perinuclear region. The catalysed reaction is L-seryl-[protein] + ATP = O-phospho-L-seryl-[protein] + ADP + H(+). The enzyme catalyses L-threonyl-[protein] + ATP = O-phospho-L-threonyl-[protein] + ADP + H(+). It catalyses the reaction [DNA-directed RNA polymerase] + ATP = phospho-[DNA-directed RNA polymerase] + ADP + H(+). Its activity is regulated as follows. Phosphorylation at Thr-162 is required for enzymatic activity. The association of p53/TP53 to the CAK complex in response to DNA damage reduces kinase activity toward CDK2 and RNA polymerase II repetitive C-terminal domain (CTD), thus stopping cell cycle progression. Serine/threonine kinase involved in cell cycle control and in RNA polymerase II-mediated RNA transcription. Cyclin-dependent kinases (CDKs) are activated by the binding to a cyclin and mediate the progression through the cell cycle. Each different complex controls a specific transition between 2 subsequent phases in the cell cycle. Required for both activation and complex formation of CDK1/cyclin-B during G2-M transition, and for activation of CDK2/cyclins during G1-S transition (but not complex formation). CDK7 is the catalytic subunit of the CDK-activating kinase (CAK) complex. Phosphorylates SPT5/SUPT5H, SF1/NR5A1, POLR2A, p53/TP53, CDK1, CDK2, CDK4, CDK6 and CDK11B/CDK11. Initiates transcription by RNA polymerase II by mediating phosphorylation of POLR2A at 'Ser-5' of the repetitive C-terminal domain (CTD) when POLR2A is in complex with DNA, promoting dissociation from DNA and initiation. CAK activates the cyclin-associated kinases CDK1, CDK2, CDK4 and CDK6 by threonine phosphorylation, thus regulating cell cycle progression. CAK complexed to the core-TFIIH basal transcription factor activates RNA polymerase II by serine phosphorylation of the CTD of POLR2A, allowing its escape from the promoter and elongation of the transcripts. Its expression and activity are constant throughout the cell cycle. Upon DNA damage, triggers p53/TP53 activation by phosphorylation, but is inactivated in turn by p53/TP53; this feedback loop may lead to an arrest of the cell cycle and of the transcription, helping in cell recovery, or to apoptosis. Required for DNA-bound peptides-mediated transcription and cellular growth inhibition. The chain is Cyclin-dependent kinase 7 (Cdk7) from Rattus norvegicus (Rat).